The following is a 924-amino-acid chain: TBC1 domain family member 30 (924 aa).

Over residues 1–11 (MDVLPTGGGRP) the composition is skewed to gly residues. Disordered regions lie at residues 1-76 (MDVL…GRTS) and 94-134 (EEEE…RSGA). Over residues 47-59 (GAAERPRRSRDTW) the composition is skewed to basic and acidic residues. The 209-residue stretch at 249 to 457 (GIPKEWRRKV…KIWDSVFFEG (209 aa)) folds into the Rab-GAP TBC domain. Disordered regions lie at residues 541 to 564 (KPTS…PDDE), 776 to 806 (GCTA…PVFG), and 838 to 924 (HPPC…TKKR). Residues 555–564 (SDEENDPDDE) are compositionally biased toward acidic residues. Serine 800 carries the post-translational modification Phosphoserine. The span at 858–870 (TSKAPQGSNSKTP) shows a compositional bias: polar residues. Over residues 914–924 (PGGGNSGTKKR) the composition is skewed to gly residues.

It localises to the cell membrane. Its function is as follows. May act as a GTPase-activating protein for Rab family protein(s). This is TBC1 domain family member 30 (TBC1D30) from Homo sapiens (Human).